The chain runs to 314 residues: Epithelial cell adhesion molecule (314 aa).

The N-terminal stretch at Met1–Ala23 is a signal peptide. The Extracellular portion of the chain corresponds to Gln24–Lys265. Cystine bridges form between Cys27/Cys46, Cys29/Cys59, Cys38/Cys48, Cys66/Cys99, Cys110/Cys116, and Cys118/Cys135. In terms of domain architecture, Thyroglobulin type-1 spans Ala63–Cys135. N-linked (GlcNAc...) asparagine; partial glycosylation is present at Asn74. The N-linked (GlcNAc...) asparagine glycan is linked to Asn111. Residue Asn198 is glycosylated (N-linked (GlcNAc...) asparagine). Residues Ala266–Ile288 traverse the membrane as a helical segment. The Cytoplasmic portion of the chain corresponds to Ser289 to Ala314.

It belongs to the EPCAM family. Monomer. Interacts with phosphorylated CLDN7. In terms of processing, hyperglycosylated in carcinoma tissue as compared with autologous normal epithelia. Glycosylation at Asn-198 is crucial for protein stability. As to expression, highly and selectively expressed by undifferentiated rather than differentiated embryonic stem cells (ESC). Levels rapidly diminish as soon as ESC's differentiate (at protein levels). Expressed in almost all epithelial cell membranes but not on mesodermal or neural cell membranes. Found on the surface of adenocarcinoma.

It is found in the lateral cell membrane. The protein resides in the cell junction. It localises to the tight junction. Its function is as follows. May act as a physical homophilic interaction molecule between intestinal epithelial cells (IECs) and intraepithelial lymphocytes (IELs) at the mucosal epithelium for providing immunological barrier as a first line of defense against mucosal infection. Plays a role in embryonic stem cells proliferation and differentiation. Up-regulates the expression of FABP5, MYC and cyclins A and E. This chain is Epithelial cell adhesion molecule (EPCAM), found in Homo sapiens (Human).